Here is a 342-residue protein sequence, read N- to C-terminus: tRNA-specific 2-thiouridylase MnmA (342 aa).

ATP is bound by residues 6-13 and Leu32; that span reads LLSGGVDS. Residue Cys92 is the Nucleophile of the active site. Cysteines 92 and 191 form a disulfide. Gly116 serves as a coordination point for ATP. Residues 138–140 are interaction with tRNA; sequence KDQ. Residue Cys191 is the Cysteine persulfide intermediate of the active site. The tract at residues 293–294 is interaction with tRNA; it reads RY.

This sequence belongs to the MnmA/TRMU family.

The protein localises to the cytoplasm. The catalysed reaction is S-sulfanyl-L-cysteinyl-[protein] + uridine(34) in tRNA + AH2 + ATP = 2-thiouridine(34) in tRNA + L-cysteinyl-[protein] + A + AMP + diphosphate + H(+). Functionally, catalyzes the 2-thiolation of uridine at the wobble position (U34) of tRNA, leading to the formation of s(2)U34. The sequence is that of tRNA-specific 2-thiouridylase MnmA from Helicobacter pylori (strain ATCC 700392 / 26695) (Campylobacter pylori).